A 311-amino-acid chain; its full sequence is Ribosomal protein L11 methyltransferase (311 aa).

Residues T160, G181, D203, and N246 each contribute to the S-adenosyl-L-methionine site.

It belongs to the methyltransferase superfamily. PrmA family.

The protein localises to the cytoplasm. The catalysed reaction is L-lysyl-[protein] + 3 S-adenosyl-L-methionine = N(6),N(6),N(6)-trimethyl-L-lysyl-[protein] + 3 S-adenosyl-L-homocysteine + 3 H(+). Its function is as follows. Methylates ribosomal protein L11. In Macrococcus caseolyticus (strain JCSC5402) (Macrococcoides caseolyticum), this protein is Ribosomal protein L11 methyltransferase.